Here is a 219-residue protein sequence, read N- to C-terminus: Probable N-acetyltransferase camello (219 aa).

Transmembrane regions (helical) follow at residues 42–62 (FYFI…SYVL) and 64–84 (LTSL…EFHG). One can recognise an N-acetyltransferase domain in the interval 62–218 (LSLTSLVALL…TVIYYRYDIK (157 aa)).

This sequence belongs to the camello family. As to expression, at the beginning of gastrulation, expressed in deep cells of the presumptive mesoderm. At later gastrulation stages, expressed at the interface between already involuted and preinvoluted mesoderm. At late neurula and tailbud stages, expressed in the deep mass of cells lying ventrally and laterally to the closed blastopore.

Its subcellular location is the golgi apparatus membrane. Functionally, plays a role in regulation of gastrulation, possibly by controlled reduction of cell adhesion which is necessary for optimal cell motility. The protein is Probable N-acetyltransferase camello of Xenopus laevis (African clawed frog).